Reading from the N-terminus, the 346-residue chain is Cell shape-determining protein MreC (346 aa).

Positions 89 to 118 (NRRLKAELAEMRQWRDRALALQDQNDRFKS) form a coiled coil. The tract at residues 292-346 (SLPPVTTEDPQTSILSNPVSRPVAPTPSPATATPSAAPAARPATTATPPQTGAPR) is disordered. Polar residues predominate over residues 299–308 (EDPQTSILSN). Low complexity predominate over residues 309 to 340 (PVSRPVAPTPSPATATPSAAPAARPATTATPP).

The protein belongs to the MreC family. As to quaternary structure, interacts with penicillin-binding proteins (PBP2, PBP1a, PBP1b, PBP2a and PBP2b). Interacts with outer membrane proteins belonging to the TonB-dependent receptor family of transport proteins.

The protein resides in the periplasm. Functionally, involved in formation and maintenance of cell shape. Required for the spatial organization of components of the peptidoglycan-synthesizing holoenzyme in the periplasm and peptidoglycan synthetic activity. This Caulobacter vibrioides (strain NA1000 / CB15N) (Caulobacter crescentus) protein is Cell shape-determining protein MreC.